The chain runs to 428 residues: 3-phosphoshikimate 1-carboxyvinyltransferase (428 aa).

K23, S24, and R28 together coordinate 3-phosphoshikimate. Residue K23 participates in phosphoenolpyruvate binding. Residues G97 and R125 each coordinate phosphoenolpyruvate. Positions 170, 171, 172, 198, 314, 338, and 342 each coordinate 3-phosphoshikimate. Q172 serves as a coordination point for phosphoenolpyruvate. D314 functions as the Proton acceptor in the catalytic mechanism. Phosphoenolpyruvate contacts are provided by R346, R388, and K413.

It belongs to the EPSP synthase family. As to quaternary structure, monomer.

It localises to the cytoplasm. It carries out the reaction 3-phosphoshikimate + phosphoenolpyruvate = 5-O-(1-carboxyvinyl)-3-phosphoshikimate + phosphate. It functions in the pathway metabolic intermediate biosynthesis; chorismate biosynthesis; chorismate from D-erythrose 4-phosphate and phosphoenolpyruvate: step 6/7. In terms of biological role, catalyzes the transfer of the enolpyruvyl moiety of phosphoenolpyruvate (PEP) to the 5-hydroxyl of shikimate-3-phosphate (S3P) to produce enolpyruvyl shikimate-3-phosphate and inorganic phosphate. The sequence is that of 3-phosphoshikimate 1-carboxyvinyltransferase from Baumannia cicadellinicola subsp. Homalodisca coagulata.